The primary structure comprises 325 residues: Glycerol-3-phosphate dehydrogenase [NAD(P)+] (325 aa).

Residues tryptophan 15, arginine 35, and lysine 107 each coordinate NADPH. Residues lysine 107, glycine 135, and serine 137 each coordinate sn-glycerol 3-phosphate. Alanine 139 contributes to the NADPH binding site. Sn-glycerol 3-phosphate is bound by residues lysine 190, aspartate 243, serine 253, arginine 254, and asparagine 255. The Proton acceptor role is filled by lysine 190. An NADPH-binding site is contributed by arginine 254. Residues leucine 272 and glutamate 274 each contribute to the NADPH site.

Belongs to the NAD-dependent glycerol-3-phosphate dehydrogenase family.

The protein localises to the cytoplasm. It carries out the reaction sn-glycerol 3-phosphate + NAD(+) = dihydroxyacetone phosphate + NADH + H(+). The catalysed reaction is sn-glycerol 3-phosphate + NADP(+) = dihydroxyacetone phosphate + NADPH + H(+). The protein operates within membrane lipid metabolism; glycerophospholipid metabolism. Functionally, catalyzes the reduction of the glycolytic intermediate dihydroxyacetone phosphate (DHAP) to sn-glycerol 3-phosphate (G3P), the key precursor for phospholipid synthesis. The protein is Glycerol-3-phosphate dehydrogenase [NAD(P)+] of Afipia carboxidovorans (strain ATCC 49405 / DSM 1227 / KCTC 32145 / OM5) (Oligotropha carboxidovorans).